Reading from the N-terminus, the 484-residue chain is Rho guanine nucleotide exchange factor 35 (484 aa).

A disordered region spans residues 139–418 (FSSDLGSEEE…ALIAPEDSPH (280 aa)). At serine 184 the chain carries Phosphoserine. The span at 217 to 237 (ESQGLLHPQEVQVLEEQGQQE) shows a compositional bias: low complexity. The span at 266 to 278 (NDEKGEQKQKQEQ) shows a compositional bias: basic and acidic residues. Residues 299–309 (GLNDGEWEQED) are compositionally biased toward acidic residues. Basic and acidic residues-rich tracts occupy residues 323–368 (GEER…KEKG) and 394–404 (RSREEENEHHG).

This is Rho guanine nucleotide exchange factor 35 (ARHGEF35) from Homo sapiens (Human).